A 270-amino-acid polypeptide reads, in one-letter code: Imidazole glycerol phosphate synthase subunit HisF (270 aa).

Residues aspartate 11 and aspartate 130 contribute to the active site.

The protein belongs to the HisA/HisF family. Heterodimer of HisH and HisF.

It localises to the cytoplasm. The catalysed reaction is 5-[(5-phospho-1-deoxy-D-ribulos-1-ylimino)methylamino]-1-(5-phospho-beta-D-ribosyl)imidazole-4-carboxamide + L-glutamine = D-erythro-1-(imidazol-4-yl)glycerol 3-phosphate + 5-amino-1-(5-phospho-beta-D-ribosyl)imidazole-4-carboxamide + L-glutamate + H(+). The protein operates within amino-acid biosynthesis; L-histidine biosynthesis; L-histidine from 5-phospho-alpha-D-ribose 1-diphosphate: step 5/9. In terms of biological role, IGPS catalyzes the conversion of PRFAR and glutamine to IGP, AICAR and glutamate. The HisF subunit catalyzes the cyclization activity that produces IGP and AICAR from PRFAR using the ammonia provided by the HisH subunit. This Chloroflexus aggregans (strain MD-66 / DSM 9485) protein is Imidazole glycerol phosphate synthase subunit HisF.